Consider the following 132-residue polypeptide: Pre-histone-like nucleoprotein (132 aa).

Residues 2–23 constitute a propeptide that is removed on maturation; the sequence is AILISPSNNTGWGLGTHKLFGG. The Nuclear localization signal motif lies at 124-132; the sequence is RRKRRVRSK.

This sequence belongs to the adenoviridae histone-like nucleoprotein family. In terms of assembly, interacts with the core-capsid bridging protein; this interaction bridges the virus core to the capsid. Interacts with host NPM1; this interaction might play a role in placing the pre-histone-like nucleoprotein on the viral DNA or regulating viral gene expression. Interacts with host HMGB1; this interaction inhibits host immune response. Post-translationally, cleaved near the N-terminus by the viral protease during virion maturation to form the mature protein.

It localises to the virion. The protein resides in the host nucleus. It is found in the host nucleolus. Plays a role in the inhibition of host immune response within the nucleus. Interacts with cellular nucleosomes and immobilizes the host immune danger signal HMGB1 on chromatin. In turn, prevents HMGB1 release out of the cell and thus decreases inflammation. Also plays a role in the wrapping and condensation of the viral DNA. May also promote viral genome import into the nucleus. The polypeptide is Pre-histone-like nucleoprotein (Canine adenovirus serotype 1 (strain CLL) (CAdV-1)).